Reading from the N-terminus, the 114-residue chain is MTNTAATTEAKMATEPPKIVWNEGKRRFETEDHEAFIEYKMRNNGKVMDLVHTYVPSFKRGLGLASHLCVAAFEHASSHSISIIPSCSYVSDTFLPRNPSWKPLIHSEVFKSSI.

Threonine 2 is subject to N-acetylthreonine. In terms of domain architecture, N-acetyltransferase spans 18-106 (KIVWNEGKRR…RNPSWKPLIH (89 aa)). Residues 52 to 55 (HTYV) and 61 to 66 (GLGLAS) contribute to the CoA site. The active-site Nucleophile is cysteine 87. Residues 88-89 (SY), threonine 93, and arginine 97 contribute to the CoA site.

Its subcellular location is the peroxisome. Functionally, possesses in vitro histone acetyltransferase activity with histones H3 and H4. In Arabidopsis thaliana (Mouse-ear cress), this protein is Acetyltransferase At1g77540.